The following is a 316-amino-acid chain: 4-hydroxy-3-methylbut-2-enyl diphosphate reductase (316 aa).

C12 contacts [4Fe-4S] cluster. Residues H41 and H74 each contribute to the (2E)-4-hydroxy-3-methylbut-2-enyl diphosphate site. The dimethylallyl diphosphate site is built by H41 and H74. Isopentenyl diphosphate-binding residues include H41 and H74. [4Fe-4S] cluster is bound at residue C96. H124 contacts (2E)-4-hydroxy-3-methylbut-2-enyl diphosphate. Dimethylallyl diphosphate is bound at residue H124. Residue H124 participates in isopentenyl diphosphate binding. E126 (proton donor) is an active-site residue. Residue T169 participates in (2E)-4-hydroxy-3-methylbut-2-enyl diphosphate binding. C199 contributes to the [4Fe-4S] cluster binding site. (2E)-4-hydroxy-3-methylbut-2-enyl diphosphate-binding residues include S227, S228, N229, and S271. Dimethylallyl diphosphate is bound by residues S227, S228, N229, and S271. Isopentenyl diphosphate contacts are provided by S227, S228, N229, and S271.

This sequence belongs to the IspH family. It depends on [4Fe-4S] cluster as a cofactor.

The enzyme catalyses isopentenyl diphosphate + 2 oxidized [2Fe-2S]-[ferredoxin] + H2O = (2E)-4-hydroxy-3-methylbut-2-enyl diphosphate + 2 reduced [2Fe-2S]-[ferredoxin] + 2 H(+). The catalysed reaction is dimethylallyl diphosphate + 2 oxidized [2Fe-2S]-[ferredoxin] + H2O = (2E)-4-hydroxy-3-methylbut-2-enyl diphosphate + 2 reduced [2Fe-2S]-[ferredoxin] + 2 H(+). It functions in the pathway isoprenoid biosynthesis; dimethylallyl diphosphate biosynthesis; dimethylallyl diphosphate from (2E)-4-hydroxy-3-methylbutenyl diphosphate: step 1/1. It participates in isoprenoid biosynthesis; isopentenyl diphosphate biosynthesis via DXP pathway; isopentenyl diphosphate from 1-deoxy-D-xylulose 5-phosphate: step 6/6. Catalyzes the conversion of 1-hydroxy-2-methyl-2-(E)-butenyl 4-diphosphate (HMBPP) into a mixture of isopentenyl diphosphate (IPP) and dimethylallyl diphosphate (DMAPP). Acts in the terminal step of the DOXP/MEP pathway for isoprenoid precursor biosynthesis. This Xanthomonas oryzae pv. oryzae (strain MAFF 311018) protein is 4-hydroxy-3-methylbut-2-enyl diphosphate reductase.